Reading from the N-terminus, the 216-residue chain is NKG2-D type II integral membrane protein (216 aa).

Residues 1–51 (MGWIRGRRSRHSWEMSEFHNYNLDLKKSDFSTRWQKQRCPVVKSKCRENAS) lie on the Cytoplasmic side of the membrane. A helical; Signal-anchor for type II membrane protein membrane pass occupies residues 52–72 (PFFFCCFIAVAMGIRFIIMVT). The Extracellular portion of the chain corresponds to 73 to 216 (IWSAVFLNSL…NTYICMQRTV (144 aa)). Cystine bridges form between Cys96-Cys105, Cys99-Cys110, Cys127-Cys211, and Cys189-Cys203. Positions 98 to 213 (PCPKNWICYK…STPNTYICMQ (116 aa)) constitute a C-type lectin domain. N-linked (GlcNAc...) asparagine glycans are attached at residues Asn131, Asn163, and Asn202.

Homodimer; disulfide-linked. Heterohexamer composed of two subunits of KLRK1 and four subunits of HCST/DAP10. Interacts (via transmembrane domain) with HCST/DAP10 (via transmembrane domain); the interaction is required for KLRK1 NK cell surface and induces NK cell-mediated cytotoxicity. Does not interact with TYROBP. Interacts with CEACAM1; recruits PTPN6 that dephosphorylates VAV1. Expressed in natural killer (NK) cells, CD8(+) alpha-beta and gamma-delta T-cells. Expressed on essentially all CD56+CD3- NK cells from freshly isolated PBMC. Expressed in interferon-producing killer dendritic cells (IKDCs).

It is found in the cell membrane. Its function is as follows. Functions as an activating and costimulatory receptor involved in immunosurveillance upon binding to various cellular stress-inducible ligands displayed at the surface of autologous tumor cells and virus-infected cells. Provides both stimulatory and costimulatory innate immune responses on activated killer (NK) cells, leading to cytotoxic activity. Acts as a costimulatory receptor for T-cell receptor (TCR) in CD8(+) T-cell-mediated adaptive immune responses by amplifying T-cell activation. Stimulates perforin-mediated elimination of ligand-expressing tumor cells. Signaling involves calcium influx, culminating in the expression of TNF-alpha. Participates in NK cell-mediated bone marrow graft rejection. May play a regulatory role in differentiation and survival of NK cells. Binds to ligands belonging to various subfamilies of MHC class I-related glycoproteins including MICA, MICB, RAET1E, RAET1G, RAET1L/ULBP6, ULBP1, ULBP2, ULBP3 (ULBP2&gt;ULBP1&gt;ULBP3) and ULBP4. This is NKG2-D type II integral membrane protein (KLRK1) from Homo sapiens (Human).